Here is a 117-residue protein sequence, read N- to C-terminus: Small ribosomal subunit protein uS17 (117 aa).

It belongs to the universal ribosomal protein uS17 family. Part of the 30S ribosomal subunit.

One of the primary rRNA binding proteins, it binds specifically to the 5'-end of 16S ribosomal RNA. This Methanocaldococcus jannaschii (strain ATCC 43067 / DSM 2661 / JAL-1 / JCM 10045 / NBRC 100440) (Methanococcus jannaschii) protein is Small ribosomal subunit protein uS17.